The following is a 189-amino-acid chain: GMP synthase [glutamine-hydrolyzing] subunit A (189 aa).

Positions 1-189 (MIVILNNGGQ…CKKCGFEFEE (189 aa)) constitute a Glutamine amidotransferase type-1 domain. Cys-76 acts as the Nucleophile in catalysis. Active-site residues include His-163 and Glu-165.

Heterodimer composed of a glutamine amidotransferase subunit (A) and a GMP-binding subunit (B).

It carries out the reaction XMP + L-glutamine + ATP + H2O = GMP + L-glutamate + AMP + diphosphate + 2 H(+). It participates in purine metabolism; GMP biosynthesis; GMP from XMP (L-Gln route): step 1/1. Functionally, catalyzes the synthesis of GMP from XMP. In Methanococcus maripaludis (strain C5 / ATCC BAA-1333), this protein is GMP synthase [glutamine-hydrolyzing] subunit A.